Here is a 79-residue protein sequence, read N- to C-terminus: MLILTRKLGESIVIGDQIQITLLDIKGKHVRIGVNAPKGIAVHRGEVYEMIQDENKKAFESDVKNSEMLSALWAQVKIL.

This sequence belongs to the CsrA/RsmA family. As to quaternary structure, homodimer; the beta-strands of each monomer intercalate to form a hydrophobic core, while the alpha-helices form wings that extend away from the core.

It localises to the cytoplasm. In terms of biological role, a translational regulator that binds mRNA to regulate translation initiation and/or mRNA stability. Usually binds in the 5'-UTR at or near the Shine-Dalgarno sequence preventing ribosome-binding, thus repressing translation. Its main target seems to be the major flagellin gene, while its function is anatagonized by FliW. This Syntrophus aciditrophicus (strain SB) protein is Translational regulator CsrA.